Consider the following 562-residue polypeptide: Probable Xaa-Pro aminopeptidase PEPP (562 aa).

The Mn(2+) site is built by Asp358, Asp369, Glu492, and Glu532.

It belongs to the peptidase M24B family. Requires Mn(2+) as cofactor.

The catalysed reaction is Release of any N-terminal amino acid, including proline, that is linked to proline, even from a dipeptide or tripeptide.. Catalyzes the removal of a penultimate prolyl residue from the N-termini of peptides. This is Probable Xaa-Pro aminopeptidase PEPP (PEPP) from Leptosphaeria maculans (strain JN3 / isolate v23.1.3 / race Av1-4-5-6-7-8) (Blackleg fungus).